The primary structure comprises 275 residues: Large ribosomal subunit protein uL2 (275 aa).

Positions 221-275 (RGSAMTPRDHPHGGGEGKAPRGMPPKTPWGKPALGKRTRRNKKSDRFIIRRRYEA) are disordered. The segment covering 227 to 239 (PRDHPHGGGEGKA) has biased composition (basic and acidic residues). Basic residues predominate over residues 254 to 263 (LGKRTRRNKK). Basic and acidic residues predominate over residues 264 to 275 (SDRFIIRRRYEA).

Belongs to the universal ribosomal protein uL2 family. In terms of assembly, part of the 50S ribosomal subunit. Forms a bridge to the 30S subunit in the 70S ribosome.

Its function is as follows. One of the primary rRNA binding proteins. Required for association of the 30S and 50S subunits to form the 70S ribosome, for tRNA binding and peptide bond formation. It has been suggested to have peptidyltransferase activity; this is somewhat controversial. Makes several contacts with the 16S rRNA in the 70S ribosome. This is Large ribosomal subunit protein uL2 from Thermomicrobium roseum (strain ATCC 27502 / DSM 5159 / P-2).